A 499-amino-acid polypeptide reads, in one-letter code: Neuronal acetylcholine receptor subunit alpha-7 (499 aa).

Positions 1-19 (MRGSLCLALAASILHVSLQ) are cleaved as a signal peptide. The Extracellular segment spans residues 20-230 (GEFQRKLYKD…VSIRRRTLYY (211 aa)). R39 and V41 together coordinate Ca(2+). N-linked (GlcNAc...) asparagine glycans are attached at residues N43, N87, and N130. An intrachain disulfide couples C147 to C161. Ca(2+)-binding residues include S169 and Y207. An intrachain disulfide couples C209 to C210. The next 3 membrane-spanning stretches (helical) occupy residues 231 to 251 (GLNL…VFLL), 259 to 279 (ISLG…VAEI), and 292 to 312 (QYFA…VIVL). Residues 257–264 (EKISLGIT) are essential for TMEM35A/NACHO-mediated proper subunit assembly and trafficking to cell membrane. Topologically, residues 313–466 (QYHHHDPDGG…WKFAACVVDR (154 aa)) are cytoplasmic. A helical membrane pass occupies residues 467 to 487 (LCLMAFSVFTILCTIGILMSA).

Belongs to the ligand-gated ion channel (TC 1.A.9) family. Acetylcholine receptor (TC 1.A.9.1) subfamily. Alpha-7/CHRNA7 sub-subfamily. Homopentamer. Homooligomer of the short form gives rise to unfunctional channels, as does coexpression of both long and short forms of the receptor. Can also form heteropentamers with CHRNB2, mainly found in basal forebrain cholinergic neurons. Interacts with RIC3; which is required for proper folding and assembly. Interacts with LYPD6. Interacts with CANX. In terms of processing, glycosylations at Asn-43, Asn-87 and Asn-130 are essential for TMEM35A/NACHO-mediated proper subunit assembly and trafficking to the cell membrane. In terms of tissue distribution, at least in chromaffin cells.

The protein resides in the postsynaptic cell membrane. Its subcellular location is the cell membrane. It carries out the reaction Ca(2+)(in) = Ca(2+)(out). The enzyme catalyses K(+)(in) = K(+)(out). The catalysed reaction is Na(+)(in) = Na(+)(out). It catalyses the reaction choline(out) = choline(in). It carries out the reaction NH4(+)(in) = NH4(+)(out). The enzyme catalyses L-arginine(in) = L-arginine(out). The catalysed reaction is guanidine(out) = guanidine(in). Its activity is regulated as follows. Activated by a myriad of ligands such as acetylcholine, cytisine, nicotine, choline and epibatidine. Oligomeric amyloid-beta protein 42 activates specifially CHRNA7:CHRNB2 nAchRs. Activity is modulated by positive allosteric modulators (PAMs), such as flavonoids, with a wide range of chemical diversity, pharmacological sensitivity and efficacy. AChR activity is inhibited by the antagonists alpha-conotoxons RgIA, ImI and ImII, small disulfide-constrained peptides from cone snails. Alpha-conotoxin PnIC selectively inhibits CHRNA7:CHRNB2 over CHRNA7 homopentamer. In terms of biological role, component of neuronal acetylcholine receptors (nAChRs) that function as pentameric, ligand-gated cation channels with high calcium permeability among other activities. nAChRs are excitatory neurotrasnmitter receptors formed by a collection of nAChR subunits known to mediate synaptic transmission in the nervous system and the neuromuscular junction. Each nAchR subunit confers differential attributes to channel properties, including activation, deactivation and desensitization kinetics, pH sensitivity, cation permeability, and binding to allosteric modulators. CHRNA7 forms homopentameric neuronal acetylcholine receptors abundantly expressed in the central nervous system, characterized by fast desensitization and high calcium permeability. Also forms heteropentamers with CHRNB2, mainly expressed in basal forebrain cholinergic neurons. Involved in the modulation of calcium-dependent signaling pathways and influences the release of neurotransmitters, including dopamine, glutamate and GABA. Also expressed in non-neuronal cells such as immune cells like lymphocytes, monocytes and macrophages. In T cells, activation induces metabotropic signaling that results in an increase of intracellular Ca2+ concentrations, independent of ionotropic receptor functions. In macrophages, required for acetylcholine-mediated inhibition of TNF and other inflammatory cytokine release. Once activated by acetylcholine, nicotine or other agonists, selectively inhibits production of pro-inflammatory cytokines while leaving anti-inflammatory cytokines undisturbed. Stimulates the cholinergic anti-inflammatory pathway, controlling inflammation by inhibiting NFKB nuclear translocation and activating the JAK2-STAT3 pathway, independently of ion channel activity. Also expressed in the urothelium where it modulates reflex bladder activity by increasing intracellular calcium through internal stores and decreasing basal ATP release. This is Neuronal acetylcholine receptor subunit alpha-7 (CHRNA7) from Bos taurus (Bovine).